We begin with the raw amino-acid sequence, 112 residues long: MKLPEVEVVVKKYDKDEVLLELPGEDHTLCNLLRWALNRQDGIIATYRIEHPILGKEHKVDEERYVPPKMRIRAVDEDADAREALERAIEELLELVEEAKEEFSGALEEKES.

This sequence belongs to the archaeal Rpo11/eukaryotic RPB11/RPC19 RNA polymerase subunit family. In terms of assembly, part of the RNA polymerase complex.

The protein localises to the cytoplasm. The enzyme catalyses RNA(n) + a ribonucleoside 5'-triphosphate = RNA(n+1) + diphosphate. DNA-dependent RNA polymerase (RNAP) catalyzes the transcription of DNA into RNA using the four ribonucleoside triphosphates as substrates. This chain is DNA-directed RNA polymerase subunit Rpo11, found in Methanopyrus kandleri (strain AV19 / DSM 6324 / JCM 9639 / NBRC 100938).